The primary structure comprises 375 residues: Growth/differentiation factor 8 (375 aa).

Positions 1–23 (MQKLAVYVYIYLFMLISVDPVAL) are cleaved as a signal peptide. Positions 24 to 266 (DDGSQPTENA…VTDTPKRSRR (243 aa)) are excised as a propeptide. An N-linked (GlcNAc...) asparagine glycan is attached at Asn71. Cystine bridges form between Cys272–Cys282, Cys281–Cys340, Cys309–Cys372, and Cys313–Cys374.

The protein belongs to the TGF-beta family. In terms of assembly, homodimer; disulfide-linked.

Its subcellular location is the secreted. Functionally, acts specifically as a negative regulator of skeletal muscle growth. The chain is Growth/differentiation factor 8 (MSTN) from Anser anser anser (Western greylag goose).